Consider the following 326-residue polypeptide: Ficolin-1 (326 aa).

The signal sequence occupies residues 1 to 29; the sequence is MELSRVAVALGPTGQLLLFLSFQTLAAQA. One can recognise a Collagen-like domain in the interval 55–93; it reads GLPGAAGPKGEAGANGPKGERGSPGVVGKAGPAGPKGDR. Composition is skewed to low complexity over residues 61–71 and 78–89; these read GPKGEAGANGP and PGVVGKAGPAGP. The disordered stretch occupies residues 61 to 110; sequence GPKGEAGANGPKGERGSPGVVGKAGPAGPKGDRGEKGARGEKGEPGQLQS. The span at 90-104 shows a compositional bias: basic and acidic residues; sequence KGDRGEKGARGEKGE. One can recognise a Fibrinogen C-terminal domain in the interval 109 to 326; the sequence is QSCATGPRTC…QVSEMKVRLT (218 aa). 2 disulfides stabilise this stretch: C111–C139 and C118–C146. The segment at 115-154 is a domain; contributes to trimerization; it reads PRTCKELLTRGHFLSGWHTIYLPDCQPLTVLCDMDTDGGG. Residues 155-243 are b domain; contributes to trimerization; that stretch reads WTVFQRRSDG…LVLGGFLEGN (89 aa). D262 and D264 together coordinate Ca(2+). Residue N265 is glycosylated (N-linked (GlcNAc...) asparagine). C270 and C283 are oxidised to a cystine. Residue 282–284 coordinates a carbohydrate; that stretch reads ACH. N313 carries an N-linked (GlcNAc...) asparagine glycan. A p domain region spans residues 317–326; sequence QVSEMKVRLT.

It belongs to the ficolin lectin family. As to quaternary structure, homotrimer. Interacts with elastin/ELN. Interacts (via Fibrinogen C-terminal domain) with FFAR2. Interacts with CRP; may regulate monocyte activation by FCN1. In terms of tissue distribution, most abundantly expressed in placenta and lung.

The protein localises to the secreted. It is found in the cell membrane. Extracellular lectin functioning as a pattern-recognition receptor in innate immunity. Binds the sugar moieties of pathogen-associated molecular patterns (PAMPs) displayed on microbes and activates the lectin pathway of the complement system. May also activate monocytes through a G protein-coupled receptor, FFAR2, inducing the secretion of interleukin-8/IL-8. Binds preferentially to 9-O-acetylated 2-6-linked sialic acid derivatives and to various glycans containing sialic acid engaged in a 2-3 linkage. The chain is Ficolin-1 (FCN1) from Sus scrofa (Pig).